The following is a 394-amino-acid chain: Protein maelstrom (394 aa).

A DNA-binding region (HMG box) is located at residues 2–69 (APKKQNGFMM…ARRDKRGSLN (68 aa)). Residues 44–93 (TQQRGPYNSDAKDANAARRDKRGSLNGHGQVDKAQREAAESLMDKAQREA) are disordered. Positions 73–93 (QVDKAQREAAESLMDKAQREA) are enriched in basic and acidic residues.

Belongs to the maelstrom family.

It is found in the cytoplasm. The protein localises to the nucleus. In terms of biological role, involved both in the piRNA and miRNA metabolic processes. As a component of the meiotic nuage, plays a central role during oogenesis by repressing transposable elements and preventing their mobilization, which is essential for the germline integrity. Repression of transposable elements is mediated via the piRNA metabolic process, which mediates the repression of transposable elements during meiosis by forming complexes composed of piRNAs and Piwi proteins and governs the repression of transposons. As a nuclear component, it is required for proper differentiation in the germline stem cell (GSC) lineage by repressing microRNA-7 (miR-7), thereby acting as an indirect regulator of bag-of-marbles (Bam). Acts by binding to the promoter of miR-7 gene and repressing its expression; miR-7 repression alleviates the Bam repression by miR-7, thereby allowing differentiation in the germline stem cell (GSC) lineage. This Drosophila simulans (Fruit fly) protein is Protein maelstrom (mael).